Here is a 132-residue protein sequence, read N- to C-terminus: ATP synthase epsilon chain (132 aa).

The protein belongs to the ATPase epsilon chain family. F-type ATPases have 2 components, CF(1) - the catalytic core - and CF(0) - the membrane proton channel. CF(1) has five subunits: alpha(3), beta(3), gamma(1), delta(1), epsilon(1). CF(0) has three main subunits: a, b and c.

The protein resides in the cell inner membrane. Its function is as follows. Produces ATP from ADP in the presence of a proton gradient across the membrane. The protein is ATP synthase epsilon chain (atpC) of Aquifex aeolicus (strain VF5).